The primary structure comprises 452 residues: Pup--protein ligase (452 aa).

A Mg(2+)-binding site is contributed by Glu-9. Residue Arg-53 coordinates ATP. Tyr-55 contacts Mg(2+). The Proton acceptor role is filled by Asp-57. Glu-63 contacts Mg(2+). ATP contacts are provided by Thr-66 and Trp-419.

The protein belongs to the Pup ligase/Pup deamidase family. Pup-conjugating enzyme subfamily.

It carries out the reaction ATP + [prokaryotic ubiquitin-like protein]-L-glutamate + [protein]-L-lysine = ADP + phosphate + N(6)-([prokaryotic ubiquitin-like protein]-gamma-L-glutamyl)-[protein]-L-lysine.. It functions in the pathway protein degradation; proteasomal Pup-dependent pathway. The protein operates within protein modification; protein pupylation. Functionally, catalyzes the covalent attachment of the prokaryotic ubiquitin-like protein modifier Pup to the proteasomal substrate proteins, thereby targeting them for proteasomal degradation. This tagging system is termed pupylation. The ligation reaction involves the side-chain carboxylate of the C-terminal glutamate of Pup and the side-chain amino group of a substrate lysine. In Mycobacterium avium (strain 104), this protein is Pup--protein ligase.